Consider the following 342-residue polypeptide: Galactose mutarotase (342 aa).

A Phosphoserine modification is found at Ser14. Beta-D-galactose is bound by residues 81-82 (NR), His107, 176-178 (HSY), Asp243, Gln279, and Glu307. His176 functions as the Proton donor in the catalytic mechanism. Residue Glu307 is the Proton acceptor of the active site.

It belongs to the aldose epimerase family. Monomer.

It localises to the cytoplasm. It catalyses the reaction alpha-D-galactose = beta-D-galactose. It carries out the reaction alpha-D-glucose = beta-D-glucose. It participates in carbohydrate metabolism; hexose metabolism. It functions in the pathway carbohydrate metabolism; galactose metabolism. Functionally, mutarotase that catalyzes the interconversion of beta-D-galactose and alpha-D-galactose during galactose metabolism. Beta-D-galactose is metabolized in the liver into glucose 1-phosphate, the primary metabolic fuel, by the action of four enzymes that constitute the Leloir pathway: GALM, GALK1 (galactokinase), GALT (galactose-1-phosphate uridylyltransferase) and GALE (UDP-galactose-4'-epimerase). Involved in the maintenance of the equilibrium between the beta- and alpha-anomers of galactose, therefore ensuring a sufficient supply of the alpha-anomer for GALK1. Also active on D-glucose although shows a preference for galactose over glucose. This is Galactose mutarotase from Mus musculus (Mouse).